The chain runs to 202 residues: Segregation and condensation protein B (202 aa).

It belongs to the ScpB family. Homodimer. Homodimerization may be required to stabilize the binding of ScpA to the Smc head domains. Component of a cohesin-like complex composed of ScpA, ScpB and the Smc homodimer, in which ScpA and ScpB bind to the head domain of Smc. The presence of the three proteins is required for the association of the complex with DNA.

It is found in the cytoplasm. Its function is as follows. Participates in chromosomal partition during cell division. May act via the formation of a condensin-like complex containing Smc and ScpA that pull DNA away from mid-cell into both cell halves. The polypeptide is Segregation and condensation protein B (Clostridium acetobutylicum (strain ATCC 824 / DSM 792 / JCM 1419 / IAM 19013 / LMG 5710 / NBRC 13948 / NRRL B-527 / VKM B-1787 / 2291 / W)).